The sequence spans 361 residues: Putative agmatine deiminase (361 aa).

Catalysis depends on Cys-354, which acts as the Amidino-cysteine intermediate.

This sequence belongs to the agmatine deiminase family.

The catalysed reaction is agmatine + H2O = N-carbamoylputrescine + NH4(+). This chain is Putative agmatine deiminase, found in Streptococcus pneumoniae (strain P1031).